The primary structure comprises 195 residues: UPF0167 protein CbrC (195 aa).

The protein belongs to the UPF0167 family.

This is UPF0167 protein CbrC (cbrC) from Escherichia coli (strain K12).